A 308-amino-acid polypeptide reads, in one-letter code: Aspartate carbamoyltransferase catalytic subunit (308 aa).

Residues arginine 49 and threonine 50 each contribute to the carbamoyl phosphate site. L-aspartate is bound at residue lysine 77. Carbamoyl phosphate-binding residues include arginine 99, histidine 127, and glutamine 130. Positions 160 and 211 each coordinate L-aspartate. Residues alanine 252 and proline 253 each contribute to the carbamoyl phosphate site.

This sequence belongs to the aspartate/ornithine carbamoyltransferase superfamily. ATCase family. As to quaternary structure, heterododecamer (2C3:3R2) of six catalytic PyrB chains organized as two trimers (C3), and six regulatory PyrI chains organized as three dimers (R2).

It catalyses the reaction carbamoyl phosphate + L-aspartate = N-carbamoyl-L-aspartate + phosphate + H(+). Its pathway is pyrimidine metabolism; UMP biosynthesis via de novo pathway; (S)-dihydroorotate from bicarbonate: step 2/3. Functionally, catalyzes the condensation of carbamoyl phosphate and aspartate to form carbamoyl aspartate and inorganic phosphate, the committed step in the de novo pyrimidine nucleotide biosynthesis pathway. The protein is Aspartate carbamoyltransferase catalytic subunit of Geobacillus thermodenitrificans (strain NG80-2).